The chain runs to 405 residues: Argininosuccinate synthase (405 aa).

Residues 11–19 and A38 each bind ATP; that span reads AYSGGLDTS. Y91 and S96 together coordinate L-citrulline. Residue G121 coordinates ATP. Residues T123, N127, and D128 each contribute to the L-aspartate site. N127 is a binding site for L-citrulline. Residues R131, S182, S191, E267, and Y279 each contribute to the L-citrulline site.

It belongs to the argininosuccinate synthase family. Type 1 subfamily. Homotetramer.

It is found in the cytoplasm. It carries out the reaction L-citrulline + L-aspartate + ATP = 2-(N(omega)-L-arginino)succinate + AMP + diphosphate + H(+). It functions in the pathway amino-acid biosynthesis; L-arginine biosynthesis; L-arginine from L-ornithine and carbamoyl phosphate: step 2/3. In Sphingopyxis alaskensis (strain DSM 13593 / LMG 18877 / RB2256) (Sphingomonas alaskensis), this protein is Argininosuccinate synthase.